We begin with the raw amino-acid sequence, 1207 residues long: Stress response protein NST1 (1207 aa).

7 disordered regions span residues 1–58 (MGLD…EETH), 248–284 (HNKQ…LPER), 398–420 (LDMS…DTDE), 451–535 (SNKN…DYDS), 586–735 (EQQK…DNLH), 1124–1148 (APAA…SDPV), and 1163–1183 (TSTG…GQPS). Over residues 7-16 (TVVTGQNVQF) the composition is skewed to polar residues. Positions 25-36 (KKSRNKKKKSKP) are enriched in basic residues. Positions 252–262 (RQYSEQQRKQQ) are enriched in low complexity. A compositionally biased stretch (acidic residues) spans 469 to 507 (EDSEYDEDLNYSDSYDDEDSPYDDDVYDDNDAESYDEDD). A compositionally biased stretch (basic residues) spans 511–523 (HKHHHQQHLHHHH). The stretch at 564–727 (VSYQEKQAER…REEDDKPTEE (164 aa)) forms a coiled coil. The segment covering 586-721 (EQQKKEKEEK…LEVKKKREED (136 aa)) has biased composition (basic and acidic residues). Low complexity predominate over residues 1163–1176 (TSTGSTSSATPTGS).

It belongs to the NST1 family.

Its subcellular location is the cytoplasm. Functionally, may act as a negative regulator of salt tolerance. The protein is Stress response protein NST1 (NST1) of Eremothecium gossypii (strain ATCC 10895 / CBS 109.51 / FGSC 9923 / NRRL Y-1056) (Yeast).